We begin with the raw amino-acid sequence, 187 residues long: MIILGIDEAGRGPLSGPVVAAGVILDQDKIIDGLADSKKLTEKKRQSLYQQIITHAKAYTIVEINPQQIDELNILQATLKAMHQVANNLERQFDKVLVDGNKLPNWDYNSEAIVKGDSKIIEISAASILAKVHRDNICLEHDRLYPQYGFAKHKGYPTKEHLENIKKYGVLDIHRKSYKPVQVLLNE.

Residues 1 to 187 (MIILGIDEAG…YKPVQVLLNE (187 aa)) form the RNase H type-2 domain. A divalent metal cation-binding residues include aspartate 7, glutamate 8, and aspartate 99.

The protein belongs to the RNase HII family. The cofactor is Mn(2+). It depends on Mg(2+) as a cofactor.

It localises to the cytoplasm. It catalyses the reaction Endonucleolytic cleavage to 5'-phosphomonoester.. Endonuclease that specifically degrades the RNA of RNA-DNA hybrids. The sequence is that of Ribonuclease HII from Francisella tularensis subsp. mediasiatica (strain FSC147).